Consider the following 149-residue polypeptide: Large ribosomal subunit protein uL15 (149 aa).

Residues 1-11 (MSDPIKLHDLR) are compositionally biased toward basic and acidic residues. A disordered region spans residues 1–44 (MSDPIKLHDLRPAPGAKKAKTRVGRGEASKGKTAGRGTKGTKAR).

The protein belongs to the universal ribosomal protein uL15 family. As to quaternary structure, part of the 50S ribosomal subunit.

In terms of biological role, binds to the 23S rRNA. In Corynebacterium jeikeium (strain K411), this protein is Large ribosomal subunit protein uL15.